Reading from the N-terminus, the 388-residue chain is Gastricsin (388 aa).

An N-terminal signal peptide occupies residues 1-16 (MKWMVVVLVCLQLLEA). A propeptide spans 17-59 (AVVKVPLKKFKSIRETMKEKGLLGEFLRTHKYDPAWKYRFGDL) (activation peptide). The 313-residue stretch at 73–385 (YFGEISIGTP…DLGNNRVGFA (313 aa)) folds into the Peptidase A1 domain. Asp-91 is a catalytic residue. Disulfide bonds link Cys-104–Cys-109 and Cys-267–Cys-271. Asp-276 is an active-site residue. A disulfide bridge links Cys-310 with Cys-343.

The protein belongs to the peptidase A1 family.

Its subcellular location is the secreted. The enzyme catalyses More restricted specificity than pepsin A, but shows preferential cleavage at Tyr-|-Xaa bonds. High activity on hemoglobin.. Its function is as follows. Hydrolyzes a variety of proteins. This chain is Gastricsin (PGC), found in Homo sapiens (Human).